The following is a 625-amino-acid chain: 1-deoxy-D-xylulose-5-phosphate synthase (625 aa).

Thiamine diphosphate-binding positions include His80 and 121–123; that span reads GHS. Asp152 is a Mg(2+) binding site. Thiamine diphosphate contacts are provided by residues 153–154, Asn181, Tyr290, and Glu371; that span reads GS. Asn181 contributes to the Mg(2+) binding site.

This sequence belongs to the transketolase family. DXPS subfamily. As to quaternary structure, homodimer. Requires Mg(2+) as cofactor. Thiamine diphosphate serves as cofactor.

It catalyses the reaction D-glyceraldehyde 3-phosphate + pyruvate + H(+) = 1-deoxy-D-xylulose 5-phosphate + CO2. It functions in the pathway metabolic intermediate biosynthesis; 1-deoxy-D-xylulose 5-phosphate biosynthesis; 1-deoxy-D-xylulose 5-phosphate from D-glyceraldehyde 3-phosphate and pyruvate: step 1/1. In terms of biological role, catalyzes the acyloin condensation reaction between C atoms 2 and 3 of pyruvate and glyceraldehyde 3-phosphate to yield 1-deoxy-D-xylulose-5-phosphate (DXP). This Haemophilus influenzae (strain PittGG) protein is 1-deoxy-D-xylulose-5-phosphate synthase.